The sequence spans 432 residues: Enolase (432 aa).

Residue Gln166 coordinates (2R)-2-phosphoglycerate. Glu210 serves as the catalytic Proton donor. 3 residues coordinate Mg(2+): Asp247, Glu288, and Asp315. Positions 340, 369, 370, and 391 each coordinate (2R)-2-phosphoglycerate. Residue Lys340 is the Proton acceptor of the active site.

The protein belongs to the enolase family. It depends on Mg(2+) as a cofactor.

The protein resides in the cytoplasm. It is found in the secreted. It localises to the cell surface. It catalyses the reaction (2R)-2-phosphoglycerate = phosphoenolpyruvate + H2O. The protein operates within carbohydrate degradation; glycolysis; pyruvate from D-glyceraldehyde 3-phosphate: step 4/5. In terms of biological role, catalyzes the reversible conversion of 2-phosphoglycerate (2-PG) into phosphoenolpyruvate (PEP). It is essential for the degradation of carbohydrates via glycolysis. The polypeptide is Enolase (Aeropyrum pernix (strain ATCC 700893 / DSM 11879 / JCM 9820 / NBRC 100138 / K1)).